The chain runs to 124 residues: Replication restart protein PriB (124 aa).

The 101-residue stretch at 12-112 (IDNCLTLTGI…LHTEQIEFID (101 aa)) folds into the SSB domain.

The protein belongs to the PriB family. Homodimer. Interacts with PriA and DnaT. Component of the replication restart primosome. Primosome assembly occurs via a 'hand-off' mechanism. PriA binds to replication forks, subsequently PriB then DnaT bind; DnaT then displaces ssDNA to generate the helicase loading substrate.

Involved in the restart of stalled replication forks, which reloads the replicative helicase on sites other than the origin of replication; the PriA-PriB pathway is the major replication restart pathway. During primosome assembly it facilitates complex formation between PriA and DnaT on DNA; stabilizes PriA on DNA. Stimulates the DNA unwinding activity of PriA helicase. In Haemophilus ducreyi (strain 35000HP / ATCC 700724), this protein is Replication restart protein PriB.